Reading from the N-terminus, the 170-residue chain is Phosphopantetheine adenylyltransferase (170 aa).

Position 10 (Thr-10) interacts with substrate. Residues 10-11 (TF) and His-18 contribute to the ATP site. Residues Lys-42, Leu-75, and Arg-89 each coordinate substrate. Residues 90 to 92 (GVR), Glu-100, and 125 to 131 (YTYVASS) each bind ATP.

The protein belongs to the bacterial CoaD family. Homohexamer. The cofactor is Mg(2+).

The protein resides in the cytoplasm. The enzyme catalyses (R)-4'-phosphopantetheine + ATP + H(+) = 3'-dephospho-CoA + diphosphate. Its pathway is cofactor biosynthesis; coenzyme A biosynthesis; CoA from (R)-pantothenate: step 4/5. Its function is as follows. Reversibly transfers an adenylyl group from ATP to 4'-phosphopantetheine, yielding dephospho-CoA (dPCoA) and pyrophosphate. The polypeptide is Phosphopantetheine adenylyltransferase (Chlorobium limicola (strain DSM 245 / NBRC 103803 / 6330)).